Consider the following 166-residue polypeptide: Lipoprotein signal peptidase (166 aa).

Transmembrane regions (helical) follow at residues 12–32 (WLWLVVVVLIIDLGSKYLILQ), 70–90 (WFFAGIAIGICVILLVMMYRS), and 102–122 (ALIIGGALGNLFDRLWHGFVV). Active-site residues include Asp123 and Asp141. Residues 137-157 (FNLADSAICIGAALIVLEGFL) form a helical membrane-spanning segment.

The protein belongs to the peptidase A8 family.

The protein localises to the cell inner membrane. The enzyme catalyses Release of signal peptides from bacterial membrane prolipoproteins. Hydrolyzes -Xaa-Yaa-Zaa-|-(S,diacylglyceryl)Cys-, in which Xaa is hydrophobic (preferably Leu), and Yaa (Ala or Ser) and Zaa (Gly or Ala) have small, neutral side chains.. It participates in protein modification; lipoprotein biosynthesis (signal peptide cleavage). This protein specifically catalyzes the removal of signal peptides from prolipoproteins. The sequence is that of Lipoprotein signal peptidase from Salmonella choleraesuis (strain SC-B67).